An 83-amino-acid polypeptide reads, in one-letter code: Small ribosomal subunit protein bS16 (83 aa).

Belongs to the bacterial ribosomal protein bS16 family.

This Pseudomonas fluorescens (strain ATCC BAA-477 / NRRL B-23932 / Pf-5) protein is Small ribosomal subunit protein bS16.